The chain runs to 513 residues: ATP synthase subunit alpha (513 aa).

An ATP-binding site is contributed by 169-176; it reads GDRQTGKT.

Belongs to the ATPase alpha/beta chains family. F-type ATPases have 2 components, CF(1) - the catalytic core - and CF(0) - the membrane proton channel. CF(1) has five subunits: alpha(3), beta(3), gamma(1), delta(1), epsilon(1). CF(0) has three main subunits: a(1), b(2) and c(9-12). The alpha and beta chains form an alternating ring which encloses part of the gamma chain. CF(1) is attached to CF(0) by a central stalk formed by the gamma and epsilon chains, while a peripheral stalk is formed by the delta and b chains.

It is found in the cell inner membrane. The catalysed reaction is ATP + H2O + 4 H(+)(in) = ADP + phosphate + 5 H(+)(out). In terms of biological role, produces ATP from ADP in the presence of a proton gradient across the membrane. The alpha chain is a regulatory subunit. The sequence is that of ATP synthase subunit alpha from Cupriavidus pinatubonensis (strain JMP 134 / LMG 1197) (Cupriavidus necator (strain JMP 134)).